Here is a 556-residue protein sequence, read N- to C-terminus: 3-phosphoinositide-dependent protein kinase 1 (556 aa).

Position 9 is a phosphotyrosine; by SRC and INSR (tyrosine 9). Serine 25 is modified (phosphoserine). The tract at residues 26–80 (PSMVRTQTESSTPPGIPGGSRQGPAMDGTAAEPRPGAGSLQHAQPPPQPRKKRPE) is disordered. Polar residues predominate over residues 28-38 (MVRTQTESSTP). A Protein kinase domain is found at 82-342 (FKFGKILGEG…YGPLKAHPFF (261 aa)). Residues 92-94 (SFS) and lysine 111 each bind ATP. A PIF-pocket region spans residues 113 to 157 (LEKRHIIKENKVPYVTRERDVMSRLDHPFFVKLYFTFQDDEKLYF). Residues 160–162 (SYA) and glutamate 166 each bind ATP. Aspartate 205 acts as the Proton acceptor in catalysis. Positions 209 and 223 each coordinate ATP. Serine 241 is subject to Phosphoserine; by autocatalysis. Residue lysine 304 is modified to N6-acetyllysine. At threonine 354 the chain carries Phosphothreonine; by MELK. Tyrosine 373 and tyrosine 376 each carry phosphotyrosine; by SRC and INSR. Serine 393 is subject to Phosphoserine. Serine 394 carries the phosphoserine; by MAP3K5 modification. Serine 396 bears the Phosphoserine mark. Serine 398 is subject to Phosphoserine; by MAP3K5. Serine 410 carries the post-translational modification Phosphoserine. In terms of domain architecture, PH spans 459–550 (KMGPVDKRKG…EVWRQRYQSH (92 aa)). At serine 501 the chain carries Phosphoserine; by PKC/PRKCQ. Threonine 513 bears the Phosphothreonine; by autocatalysis mark. At serine 529 the chain carries Phosphoserine; by PKC/PRKCQ.

The protein belongs to the protein kinase superfamily. AGC Ser/Thr protein kinase family. PDPK1 subfamily. Homodimer in its autoinhibited state. Active as monomer. Interacts with NPRL2, PPARG, PAK1, PTK2B, GRB14, PKN1 (via C-terminus), STRAP and IKKB. The Tyr-9 phosphorylated form interacts with SRC, RASA1 and CRK (via their SH2 domains). Interacts with SGK3 in a phosphorylation-dependent manner. The tyrosine-phosphorylated form interacts with PTPN6. The Ser-241 phosphorylated form interacts with YWHAH and YWHAQ. Binds INSR in response to insulin. Interacts (via PH domain) with SMAD3, SMAD4 and SMAD7. Interacts with PKN2; the interaction stimulates PDPK1 autophosphorylation, its PI(3,4,5)P3-dependent kinase activity toward 'Ser-473' of AKT1 but also activates its kinase activity toward PRKCD and PRKCZ. Phosphorylation on Ser-241 in the activation loop is required for full activity. PDPK1 itself can autophosphorylate Ser-241, leading to its own activation. Autophosphorylation is inhibited by the apoptotic C-terminus cleavage product of PKN2. Tyr-9 phosphorylation is critical for stabilization of both PDPK1 and the PDPK1/SRC complex via HSP90-mediated protection of PDPK1 degradation. Angiotensin II stimulates the tyrosine phosphorylation of PDPK1 in vascular smooth muscle in a calcium- and SRC-dependent manner. Phosphorylated on Tyr-9, Tyr-373 and Tyr-376 by INSR in response to insulin. Palmitate negatively regulates autophosphorylation at Ser-241 and palmitate-induced phosphorylation at Ser-529 and Ser-501 by PKC/PRKCQ negatively regulates its ability to phosphorylate PKB/AKT1. Phosphorylation at Thr-354 by MELK partially inhibits kinase activity, the inhibition is cooperatively enhanced by phosphorylation at Ser-394 and Ser-398 by MAP3K5. Post-translationally, autophosphorylated; autophosphorylation is inhibited by the apoptotic C-terminus cleavage product of PKN2. In terms of processing, monoubiquitinated in the kinase domain, deubiquitinated by USP4. Appears to be expressed ubiquitously. The Tyr-9 phosphorylated form is markedly increased in diseased tissue compared with normal tissue from lung, liver, colon and breast.

Its subcellular location is the cytoplasm. It localises to the nucleus. The protein localises to the cell membrane. It is found in the cell junction. The protein resides in the focal adhesion. The enzyme catalyses L-seryl-[protein] + ATP = O-phospho-L-seryl-[protein] + ADP + H(+). The catalysed reaction is L-threonyl-[protein] + ATP = O-phospho-L-threonyl-[protein] + ADP + H(+). Homodimerization regulates its activity by maintaining the kinase in an autoinhibitory conformation. NPRL2 down-regulates its activity by interfering with tyrosine phosphorylation at the Tyr-9, Tyr-373 and Tyr-376 residues. The 14-3-3 protein YWHAQ acts as a negative regulator by association with the residues surrounding the Ser-241 residue. STRAP positively regulates its activity by enhancing its autophosphorylation and by stimulating its dissociation from YWHAQ. SMAD2, SMAD3, SMAD4 and SMAD7 also positively regulate its activity by stimulating its dissociation from YWHAQ. Activated by phosphorylation on Tyr-9, Tyr-373 and Tyr-376 by INSR in response to insulin. Its function is as follows. Serine/threonine kinase which acts as a master kinase, phosphorylating and activating a subgroup of the AGC family of protein kinases. Its targets include: protein kinase B (PKB/AKT1, PKB/AKT2, PKB/AKT3), p70 ribosomal protein S6 kinase (RPS6KB1), p90 ribosomal protein S6 kinase (RPS6KA1, RPS6KA2 and RPS6KA3), cyclic AMP-dependent protein kinase (PRKACA), protein kinase C (PRKCD and PRKCZ), serum and glucocorticoid-inducible kinase (SGK1, SGK2 and SGK3), p21-activated kinase-1 (PAK1), TSSK3, protein kinase PKN (PKN1 and PKN2). Plays a central role in the transduction of signals from insulin by providing the activating phosphorylation to PKB/AKT1, thus propagating the signal to downstream targets controlling cell proliferation and survival, as well as glucose and amino acid uptake and storage. Negatively regulates the TGF-beta-induced signaling by: modulating the association of SMAD3 and SMAD7 with TGF-beta receptor, phosphorylating SMAD2, SMAD3, SMAD4 and SMAD7, preventing the nuclear translocation of SMAD3 and SMAD4 and the translocation of SMAD7 from the nucleus to the cytoplasm in response to TGF-beta. Activates PPARG transcriptional activity and promotes adipocyte differentiation. Activates the NF-kappa-B pathway via phosphorylation of IKKB. The tyrosine phosphorylated form is crucial for the regulation of focal adhesions by angiotensin II. Controls proliferation, survival, and growth of developing pancreatic cells. Participates in the regulation of Ca(2+) entry and Ca(2+)-activated K(+) channels of mast cells. Essential for the motility of vascular endothelial cells (ECs) and is involved in the regulation of their chemotaxis. Plays a critical role in cardiac homeostasis by serving as a dual effector for cell survival and beta-adrenergic response. Plays an important role during thymocyte development by regulating the expression of key nutrient receptors on the surface of pre-T cells and mediating Notch-induced cell growth and proliferative responses. Provides negative feedback inhibition to toll-like receptor-mediated NF-kappa-B activation in macrophages. Functionally, catalytically inactive. This is 3-phosphoinositide-dependent protein kinase 1 (PDPK1) from Homo sapiens (Human).